The following is a 427-amino-acid chain: Trigger factor (427 aa).

One can recognise a PPIase FKBP-type domain in the interval 163-248 (GDTVVIDFVG…IHEVKAKEVP (86 aa)).

Belongs to the FKBP-type PPIase family. Tig subfamily.

It localises to the cytoplasm. The enzyme catalyses [protein]-peptidylproline (omega=180) = [protein]-peptidylproline (omega=0). Involved in protein export. Acts as a chaperone by maintaining the newly synthesized protein in an open conformation. Functions as a peptidyl-prolyl cis-trans isomerase. The chain is Trigger factor from Streptococcus pneumoniae (strain Hungary19A-6).